Reading from the N-terminus, the 239-residue chain is Norbelladine 4'-O-methyltransferase 2 (239 aa).

Residues Val55, Glu77, Gly79–Val80, Ser85, Asp103, and Ala132 each bind S-adenosyl-L-methionine. Asp155 serves as a coordination point for a divalent metal cation. Position 157 (Asp157) interacts with S-adenosyl-L-methionine. Positions 181 and 182 each coordinate a divalent metal cation.

This sequence belongs to the class I-like SAM-binding methyltransferase superfamily. Cation-dependent O-methyltransferase family. The cofactor is Mg(2+).

It catalyses the reaction norbelladine + S-adenosyl-L-methionine = 4'-O-methylnorbelladine + S-adenosyl-L-homocysteine + H(+). The protein operates within alkaloid biosynthesis. 4'-O-methyltransferase converting norbelladine to 4'-O-methylnorbelladine. 4'-O-methylnorbelladine is a precursor to all Amaryllidaceae alkaloids such as galanthamine, lycorine and haemanthamine, and including haemanthamine- and crinamine-type alkaloids, promising anticancer agents. The polypeptide is Norbelladine 4'-O-methyltransferase 2 (Narcissus aff. pseudonarcissus MK-2014 (Daffodil)).